A 189-amino-acid chain; its full sequence is Potassium-transporting ATPase KdpC subunit (189 aa).

Residues 6–26 (PAILFFIVFTILCGGVYPAVV) form a helical membrane-spanning segment.

The protein belongs to the KdpC family. In terms of assembly, the system is composed of three essential subunits: KdpA, KdpB and KdpC.

The protein resides in the cell inner membrane. Functionally, part of the high-affinity ATP-driven potassium transport (or Kdp) system, which catalyzes the hydrolysis of ATP coupled with the electrogenic transport of potassium into the cytoplasm. This subunit acts as a catalytic chaperone that increases the ATP-binding affinity of the ATP-hydrolyzing subunit KdpB by the formation of a transient KdpB/KdpC/ATP ternary complex. This chain is Potassium-transporting ATPase KdpC subunit, found in Geotalea uraniireducens (strain Rf4) (Geobacter uraniireducens).